The following is a 177-amino-acid chain: Protein PrsK (177 aa).

Residues 1 to 21 form the signal peptide; that stretch reads MIKSTGALLLFAALSAGQAMA.

It localises to the fimbrium. This chain is Protein PrsK (prsK), found in Escherichia coli.